Consider the following 909-residue polypeptide: Coatomer subunit beta'-3 (909 aa).

WD repeat units lie at residues 13–52 (QRSERVKSVDLHPTEPWILASLYSGTVCIWNYQTQTITKS), 55–94 (VTELPVRSAKFIPRKQWVVAGADDMYIRVYNYNTMDKVKV), 97–136 (AHSDYIRCVAVHPTLPYVLSSSDDMLIKLWDWENGWACTQ), 140–180 (GHSH…PNFT), 183–224 (AHQK…CVQT), 227–266 (GHTHNVSAVCFHPELPIIITGSEDGTVRIWHATTYRLENT), 269–309 (YGLE…ASMD), 351–390 (TCDLYPQSLKHNPNGRFVVVCGDGEYIIYTALAWRNRSFG), and 461–501 (QIDV…SHFD). Residues 862 to 909 (EENGHVENEGDEEEQQEEEVNEEEGVVDADSTDGAVLVNGSEVLTPHP) are disordered. Over residues 870 to 892 (EGDEEEQQEEEVNEEEGVVDADS) the composition is skewed to acidic residues.

Belongs to the WD repeat COPB2 family. In terms of assembly, oligomeric complex that consists of at least the alpha, beta, beta', gamma, delta, epsilon and zeta subunits.

It localises to the cytoplasm. The protein resides in the golgi apparatus membrane. It is found in the cytoplasmic vesicle. Its subcellular location is the COPI-coated vesicle membrane. The coatomer is a cytosolic protein complex that binds to dilysine motifs and reversibly associates with Golgi non-clathrin-coated vesicles, which further mediate biosynthetic protein transport from the ER, via the Golgi up to the trans Golgi network. Coatomer complex is required for budding from Golgi membranes, and is essential for the retrograde Golgi-to-ER transport of dilysine-tagged proteins. This is Coatomer subunit beta'-3 from Arabidopsis thaliana (Mouse-ear cress).